Reading from the N-terminus, the 66-residue chain is Large ribosomal subunit protein bL33c (66 aa).

The protein belongs to the bacterial ribosomal protein bL33 family.

Its subcellular location is the plastid. It is found in the chloroplast. This is Large ribosomal subunit protein bL33c from Calycanthus floridus var. glaucus (Eastern sweetshrub).